Here is a 151-residue protein sequence, read N- to C-terminus: Deoxyuridine 5'-triphosphate nucleotidohydrolase (151 aa).

Substrate contacts are provided by residues 70-72, Asn-83, 87-89, and Met-97; these read RSG and LID.

This sequence belongs to the dUTPase family. The cofactor is Mg(2+).

It carries out the reaction dUTP + H2O = dUMP + diphosphate + H(+). It functions in the pathway pyrimidine metabolism; dUMP biosynthesis; dUMP from dCTP (dUTP route): step 2/2. This enzyme is involved in nucleotide metabolism: it produces dUMP, the immediate precursor of thymidine nucleotides and it decreases the intracellular concentration of dUTP so that uracil cannot be incorporated into DNA. The chain is Deoxyuridine 5'-triphosphate nucleotidohydrolase from Haemophilus influenzae (strain 86-028NP).